The sequence spans 215 residues: Cytochrome b6 (215 aa).

Residues I32–F52 traverse the membrane as a helical segment. A heme c-binding site is contributed by C35. The heme b site is built by H86 and H100. 3 helical membrane passes run A90 to F110, L116 to Y136, and L186 to I206. Heme b contacts are provided by H187 and H202.

This sequence belongs to the cytochrome b family. PetB subfamily. The 4 large subunits of the cytochrome b6-f complex are cytochrome b6, subunit IV (17 kDa polypeptide, PetD), cytochrome f and the Rieske protein, while the 4 small subunits are PetG, PetL, PetM and PetN. The complex functions as a dimer. Heme b is required as a cofactor. Heme c serves as cofactor.

It localises to the plastid. It is found in the chloroplast thylakoid membrane. Component of the cytochrome b6-f complex, which mediates electron transfer between photosystem II (PSII) and photosystem I (PSI), cyclic electron flow around PSI, and state transitions. The sequence is that of Cytochrome b6 from Eucalyptus globulus subsp. globulus (Tasmanian blue gum).